Reading from the N-terminus, the 306-residue chain is Beta-lactamase 1 (306 aa).

Positions 1–43 (MKNKKMLKIGMCVGILGLSITSLVTFTGGALQVEAKEKTGQVK) are cleaved as a signal peptide. Ser-89 serves as the catalytic Acyl-ester intermediate. Glu-185 serves as the catalytic Proton acceptor. A substrate-binding site is contributed by 251–253 (KSG).

The protein belongs to the class-A beta-lactamase family.

It localises to the secreted. It catalyses the reaction a beta-lactam + H2O = a substituted beta-amino acid. In terms of biological role, acts preferentially on penicillins. The protein is Beta-lactamase 1 (penPC) of Bacillus cereus.